Reading from the N-terminus, the 432-residue chain is Fibroleukin (432 aa).

An N-terminal signal peptide occupies residues 1–19; that stretch reads MRLPGWLWLSSAVLAACRA. Asn-24 carries N-linked (GlcNAc...) asparagine glycosylation. The stretch at 71 to 157 forms a coiled coil; it reads GSMEEVLKEV…QGRLETLHLV (87 aa). The segment at 100–122 is disordered; the sequence is QADDHRDPGGNGGNGAETAEDSR. Residues Asn-172, Asn-228, Asn-256, and Asn-329 are each glycosylated (N-linked (GlcNAc...) asparagine). Positions 197–429 constitute a Fibrinogen C-terminal domain; the sequence is PVQHLIYKDC…QAKMMIRPKN (233 aa). Cysteines 206 and 235 form a disulfide. An intrachain disulfide couples Cys-364 to Cys-377.

Homotetramer; disulfide-linked. As to expression, constitutively expressed in cytotoxic T-cells.

Its subcellular location is the secreted. Functionally, converts prothrombin to thrombin. This is Fibroleukin (Fgl2) from Mus musculus (Mouse).